The following is a 627-amino-acid chain: (R)-linalool synthase 1, chloroplastic (627 aa).

The transit peptide at 1-21 (MAFVSIAPLASRCCVHKSFVS) directs the protein to the chloroplast. Asp-378, Asp-382, and Glu-530 together coordinate Mg(2+). The DDXXD motif motif lies at 378-382 (DDIYD).

The protein belongs to the terpene synthase family. Tpsd subfamily. Mg(2+) serves as cofactor. The cofactor is Mn(2+).

It is found in the plastid. The protein localises to the chloroplast. It carries out the reaction (2E)-geranyl diphosphate + H2O = (R)-linalool + diphosphate. The protein operates within terpene metabolism; oleoresin biosynthesis. In terms of biological role, terpene synthase (TPS) involved in the biosynthesis of monoterpene natural products included in conifer oleoresin secretions and volatile emissions; these compounds contribute to biotic and abiotic stress defense against herbivores and pathogens. Catalyzes the conversion of (2E)-geranyl diphosphate (GPP) to (R)-linalool. This chain is (R)-linalool synthase 1, chloroplastic, found in Picea sitchensis (Sitka spruce).